Reading from the N-terminus, the 391-residue chain is Autophagy-related protein 18d (391 aa).

Positions 1–24 are disordered; the sequence is MDPRRNFQPGGYDSRNTFTSGSFG. 4 WD repeats span residues 31-69, 74-118, 203-243, and 248-287; these read SDEA…ETFR, DGGF…CISE, AHDS…RLQE, and VDRA…IGED.

The protein belongs to the WD repeat PROPPIN family. In terms of assembly, component of the PI(3,5)P2 regulatory complex at least composed of ATG18, SAC/FIG4, FAB1 and VAC14. As to expression, expressed in roots, stems, flowers and leaves.

The protein resides in the preautophagosomal structure membrane. It localises to the vacuole membrane. Its function is as follows. The PI(3,5)P2 regulatory complex regulates both the synthesis and turnover of phosphatidylinositol 3,5-bisphosphate (PtdIns(3,5)P2). Required for autophagy. The chain is Autophagy-related protein 18d (ATG18D) from Arabidopsis thaliana (Mouse-ear cress).